Reading from the N-terminus, the 391-residue chain is Extracellular metalloproteinase 3 (391 aa).

Positions 1 to 9 (HNVVDYVAS) are excised as a propeptide. Residue Asn-173 is glycosylated (N-linked (GlcNAc...) asparagine). Position 192 (His-192) interacts with Zn(2+). Residue Glu-193 is part of the active site. His-196 contacts Zn(2+). N-linked (GlcNAc...) asparagine glycans are attached at residues Asn-243 and Asn-385.

Belongs to the peptidase M36 family. It depends on Zn(2+) as a cofactor.

The protein resides in the secreted. In terms of biological role, secreted metalloproteinase probably acting as a virulence factor. This is Extracellular metalloproteinase 3 (MEP3) from Trichophyton soudanense.